A 495-amino-acid polypeptide reads, in one-letter code: Ectonucleoside triphosphate diphosphohydrolase 2 (495 aa).

Residues 1–4 lie on the Cytoplasmic side of the membrane; the sequence is MAGK. A helical membrane pass occupies residues 5–25; sequence LVSLVPPLLLAAVGLAGLLLL. The Extracellular segment spans residues 26-462; it reads CVPTQDVREP…PGLRKGTHFS (437 aa). N-linked (GlcNAc...) asparagine glycosylation occurs at N64. C75 and C99 are disulfide-bonded. N-linked (GlcNAc...) asparagine glycosylation is present at N129. E165 acts as the Proton acceptor in catalysis. 204–208 is an ATP binding site; sequence GASTQ. Intrachain disulfides connect C242–C284 and C265–C310. Residues N294 and N319 are each glycosylated (N-linked (GlcNAc...) asparagine). 2 disulfides stabilise this stretch: C323/C328 and C377/C399. N-linked (GlcNAc...) asparagine glycosylation is found at N378 and N443. Residues 463 to 483 form a helical membrane-spanning segment; that stretch reads SWVALLLLFTVLILAALVLLL. Topologically, residues 484–495 are cytoplasmic; the sequence is RQVRSAKSPGAL.

It belongs to the GDA1/CD39 NTPase family. Ca(2+) is required as a cofactor. Requires Mg(2+) as cofactor.

The protein resides in the cell membrane. Functionally, in the nervous system, could hydrolyze ATP and other nucleotides to regulate purinergic neurotransmission. Hydrolyzes ADP only to a marginal extent. This chain is Ectonucleoside triphosphate diphosphohydrolase 2 (Entpd2), found in Mus musculus (Mouse).